The sequence spans 605 residues: Capsid scaffolding protein (605 aa).

Active-site charge relay system residues include His48, Ser116, and His139. The segment at 235 to 275 (ASDAPDLQKPDKALQSPPPASTDPDTMLSGNAGEGATACGG) is disordered. An interaction with pAP region spans residues 281–300 (QDLISVPRNTFMTLLQTNLD). Disordered regions lie at residues 403 to 432 (DYVP…PGED) and 489 to 588 (PHQS…KSVS). The Nuclear localization signal motif lies at 410-416 (RSNKRKR). Positions 568-579 (ASASGVAQSKEP) are enriched in polar residues. Residues 585–605 (KSVSAHLKSIFCEELLNKRVA) form an interaction with major capsid protein region.

Belongs to the herpesviridae capsid scaffolding protein family. In terms of assembly, homomultimer. Interacts with major capsid protein. As to quaternary structure, exists in a monomer-dimer equilibrium with the dimer being the active species. In terms of processing, capsid scaffolding protein is cleaved by assemblin after formation of the spherical procapsid. As a result, the capsid obtains its mature, icosahedral shape. Cleavages occur at two or more sites: release (R-site) and maturation (M-site).

The protein resides in the host cytoplasm. It localises to the host nucleus. The catalysed reaction is Cleaves -Ala-|-Ser- and -Ala-|-Ala- bonds in the scaffold protein.. Its function is as follows. Acts as a scaffold protein by binding major capsid protein in the cytoplasm, inducing the nuclear localization of both proteins. Multimerizes in the nucleus such as major capsid protein forms the icosahedral T=16 capsid. Autocatalytic cleavage releases the assembly protein, and subsequently abolishes interaction with major capsid protein. Cleavages products are evicted from the capsid before or during DNA packaging. Protease that plays an essential role in virion assembly within the nucleus. Catalyzes the cleavage of the assembly protein after formation of the spherical procapsid. By that cleavage, the capsid matures and gains its icosahedral shape. The cleavage sites seem to include -Ala-Ser-, -Ala-Ala-, as well as Ala-Thr bonds. Assemblin and cleavages products are evicted from the capsid before or during DNA packaging. In terms of biological role, plays a major role in capsid assembly. Acts as a scaffold protein by binding major capsid protein. Multimerizes in the nucleus such as major capsid protein forms the icosahedral T=16 capsid. Cleaved by assemblin after capsid completion. The cleavages products are evicted from the capsid before or during DNA packaging. This Epstein-Barr virus (strain AG876) (HHV-4) protein is Capsid scaffolding protein.